A 282-amino-acid polypeptide reads, in one-letter code: Energy-coupling factor transporter ATP-binding protein EcfA2 (282 aa).

The 234-residue stretch at 1 to 234 (MKGSPFEKVA…ADELVALGLD (234 aa)) folds into the ABC transporter domain. 28–35 (GHTGSGKS) provides a ligand contact to ATP.

Belongs to the ABC transporter superfamily. Energy-coupling factor EcfA family. As to quaternary structure, forms a stable energy-coupling factor (ECF) transporter complex composed of 2 membrane-embedded substrate-binding proteins (S component), 2 ATP-binding proteins (A component) and 2 transmembrane proteins (T component).

It localises to the cell membrane. In terms of biological role, ATP-binding (A) component of a common energy-coupling factor (ECF) ABC-transporter complex. Unlike classic ABC transporters this ECF transporter provides the energy necessary to transport a number of different substrates. The chain is Energy-coupling factor transporter ATP-binding protein EcfA2 from Halalkalibacterium halodurans (strain ATCC BAA-125 / DSM 18197 / FERM 7344 / JCM 9153 / C-125) (Bacillus halodurans).